The primary structure comprises 283 residues: Extracellular metalloprotease MGG_08041 (283 aa).

Positions 1–22 are cleaved as a signal peptide; the sequence is MQINVVKTFLFALAASSVSALA. An N-linked (GlcNAc...) asparagine glycan is attached at N55. Zn(2+) is bound at residue H197. E198 is a catalytic residue. H201 contributes to the Zn(2+) binding site. C233 and C260 are oxidised to a cystine.

Belongs to the peptidase M43B family.

The protein resides in the secreted. Functionally, secreted metalloproteinase that allows assimilation of proteinaceous substrates. The sequence is that of Extracellular metalloprotease MGG_08041 from Pyricularia oryzae (strain 70-15 / ATCC MYA-4617 / FGSC 8958) (Rice blast fungus).